The following is a 315-amino-acid chain: Aspartate carbamoyltransferase catalytic subunit (315 aa).

Residues Arg64 and Thr65 each coordinate carbamoyl phosphate. Residue Lys92 coordinates L-aspartate. Carbamoyl phosphate-binding residues include Arg114, His142, and Gln145. 2 residues coordinate L-aspartate: Arg175 and Arg229. Carbamoyl phosphate contacts are provided by Gly270 and Pro271.

This sequence belongs to the aspartate/ornithine carbamoyltransferase superfamily. ATCase family. In terms of assembly, heterododecamer (2C3:3R2) of six catalytic PyrB chains organized as two trimers (C3), and six regulatory PyrI chains organized as three dimers (R2).

The catalysed reaction is carbamoyl phosphate + L-aspartate = N-carbamoyl-L-aspartate + phosphate + H(+). Its pathway is pyrimidine metabolism; UMP biosynthesis via de novo pathway; (S)-dihydroorotate from bicarbonate: step 2/3. In terms of biological role, catalyzes the condensation of carbamoyl phosphate and aspartate to form carbamoyl aspartate and inorganic phosphate, the committed step in the de novo pyrimidine nucleotide biosynthesis pathway. The chain is Aspartate carbamoyltransferase catalytic subunit from Bradyrhizobium diazoefficiens (strain JCM 10833 / BCRC 13528 / IAM 13628 / NBRC 14792 / USDA 110).